A 123-amino-acid chain; its full sequence is Immunoglobulin lambda variable 5-39 (123 aa).

Residues 1–19 (MAWTPLLLLLLSHCTGSLS) form the signal peptide. A framework-1 region spans residues 20–44 (QPVLTQPTSLSASPGASARFTCTLR). In terms of domain architecture, Ig-like spans 21 to 123 (PVLTQPTSLS…YCAIWYSSTS (103 aa)). An intrachain disulfide couples Cys41 to Cys115. Positions 45 to 53 (SGINVGTYR) are complementarity-determining-1. The segment at 54 to 70 (IYWYQQKPGSLPRYLLR) is framework-2. Residues 71 to 77 (YKSDSDK) are complementarity-determining-2. The interval 78–115 (QQGSGVPSRFSGSKDASTNAGLLLISGLQSEDEADYYC) is framework-3. The complementarity-determining-3 stretch occupies residues 116–123 (AIWYSSTS).

Immunoglobulins are composed of two identical heavy chains and two identical light chains; disulfide-linked.

It is found in the secreted. The protein resides in the cell membrane. V region of the variable domain of immunoglobulin light chains that participates in the antigen recognition. Immunoglobulins, also known as antibodies, are membrane-bound or secreted glycoproteins produced by B lymphocytes. In the recognition phase of humoral immunity, the membrane-bound immunoglobulins serve as receptors which, upon binding of a specific antigen, trigger the clonal expansion and differentiation of B lymphocytes into immunoglobulins-secreting plasma cells. Secreted immunoglobulins mediate the effector phase of humoral immunity, which results in the elimination of bound antigens. The antigen binding site is formed by the variable domain of one heavy chain, together with that of its associated light chain. Thus, each immunoglobulin has two antigen binding sites with remarkable affinity for a particular antigen. The variable domains are assembled by a process called V-(D)-J rearrangement and can then be subjected to somatic hypermutations which, after exposure to antigen and selection, allow affinity maturation for a particular antigen. This Homo sapiens (Human) protein is Immunoglobulin lambda variable 5-39.